A 97-amino-acid chain; its full sequence is Large ribosomal subunit protein bL31 (97 aa).

The disordered stretch occupies residues 75 to 97 (NKTKKSNQAKVEKQTRHRSINEL). A compositionally biased stretch (basic and acidic residues) spans 84–97 (KVEKQTRHRSINEL).

This sequence belongs to the bacterial ribosomal protein bL31 family. Type A subfamily. Part of the 50S ribosomal subunit.

Functionally, binds the 23S rRNA. This is Large ribosomal subunit protein bL31 from Mycoplasma genitalium (strain ATCC 33530 / DSM 19775 / NCTC 10195 / G37) (Mycoplasmoides genitalium).